Here is a 340-residue protein sequence, read N- to C-terminus: Manganese-dependent ADP-ribose/CDP-alcohol diphosphatase (340 aa).

An N-acetylmethionine modification is found at Met-1. 7 residues coordinate Zn(2+): Asp-25, Gln-27, Asp-74, Asn-110, His-241, His-278, and His-280.

It belongs to the ADPRibase-Mn family. In terms of assembly, monomer. Mg(2+) is required as a cofactor.

It catalyses the reaction CDP-choline + H2O = phosphocholine + CMP + 2 H(+). It carries out the reaction ADP-D-ribose + H2O = D-ribose 5-phosphate + AMP + 2 H(+). The catalysed reaction is CDP-glycerol + H2O = sn-glycerol 3-phosphate + CMP + 2 H(+). Hydrolyzes ADP-ribose, IDP-ribose, CDP-glycerol, CDP-choline and CDP-ethanolamine, but not other non-reducing ADP-sugars or CDP-glucose. May be involved in immune cell signaling as suggested by the second-messenger role of ADP-ribose, which activates TRPM2 as a mediator of oxidative/nitrosative stress. This Mus musculus (Mouse) protein is Manganese-dependent ADP-ribose/CDP-alcohol diphosphatase (Adprm).